We begin with the raw amino-acid sequence, 128 residues long: Leucine-rich single-pass membrane protein 1 (128 aa).

Phosphoserine is present on serine 24. The chain crosses the membrane as a helical span at residues 66–86 (GLLLVLTVSLALVFFAIFLII). A coiled-coil region spans residues 90 to 111 (NQMEDVSRRLTAEGKDIDDLKK).

It localises to the membrane. The chain is Leucine-rich single-pass membrane protein 1 (Lsmem1) from Mus musculus (Mouse).